The chain runs to 408 residues: Putative odorant receptor 92a (408 aa).

The Cytoplasmic portion of the chain corresponds to 1–52 (MLFRKRKPKSDDEVITFDELTRFPMTFYKTIGEDLYSDRDPNVIRRYLLRFY). A helical transmembrane segment spans residues 53–73 (LVLGFLNFNAYVVGEIAYFIV). Position 74 (His-74) is a topological domain, extracellular. Residues 75–95 (IMSTTTLLEATAVAPCIGFSF) form a helical membrane-spanning segment. The Cytoplasmic segment spans residues 96–144 (MADFKQFGLTVNRKRLVRLLDDLKEIFPLDLEAQRKYNVSFYRKHMNRV). The helical transmembrane segment at 145–165 (MTLFTILCMTYTSSFSFYPAI) threads the bilayer. Topologically, residues 166 to 209 (KSTIKYYLMGSEIFERNYGFHILFPYDAETDLTVYWFSYWGLAH) are extracellular. A helical membrane pass occupies residues 210 to 230 (CAYVAGVSYVCVDLLLIATIT). The Cytoplasmic portion of the chain corresponds to 231-276 (QLTMHFNFIANDLEAYEGGDHTDEENIKYLHNLVVYHARALDLSEE). A helical membrane pass occupies residues 277-301 (VNNIFSFLILWNFIAASLVICFAGF). Over 302–310 (QITASNVED) the chain is Extracellular. Residues 311 to 331 (IVLYFIFFSASLVQVFVVCYY) form a helical membrane-spanning segment. Topologically, residues 332–378 (GDEMISSSSRIGHSAFNQNWLPCSTKYKRILQFIIARSQKPASIRPP) are cytoplasmic. A helical membrane pass occupies residues 379–399 (TFPPISFNTFMKVISMSYQFF). At 400-408 (ALLRTTYYG) the chain is on the extracellular side.

Belongs to the insect chemoreceptor superfamily. Heteromeric odorant receptor channel (TC 1.A.69) family. Or49a subfamily. Interacts with Orco. Complexes exist early in the endomembrane system in olfactory sensory neurons (OSNs), coupling these complexes to the conserved ciliary trafficking pathway.

It is found in the cell membrane. Functionally, odorant receptor which mediates acceptance or avoidance behavior, depending on its substrates. The odorant receptor repertoire encodes a large collection of odor stimuli that vary widely in identity, intensity, and duration. May form a complex with Orco to form odorant-sensing units, providing sensitive and prolonged odorant signaling and calcium permeability. The polypeptide is Putative odorant receptor 92a (Or92a) (Drosophila melanogaster (Fruit fly)).